The following is a 38-amino-acid chain: Defensin-1 (38 aa).

3 disulfides stabilise this stretch: Cys4–Cys25, Cys11–Cys33, and Cys15–Cys35.

It localises to the secreted. In terms of biological role, has antibacterial activity against the Gram-positive bacteria L.lactis and S.aureus, and against the Gram-negative bacteria E.coli D32 and V.parahemolyticus. This is Defensin-1 from Crassostrea virginica (Eastern oyster).